A 116-amino-acid chain; its full sequence is Iron-sulfur cluster assembly protein CyaY (116 aa).

The protein belongs to the frataxin family.

Involved in iron-sulfur (Fe-S) cluster assembly. May act as a regulator of Fe-S biogenesis. The chain is Iron-sulfur cluster assembly protein CyaY from Polaromonas sp. (strain JS666 / ATCC BAA-500).